Consider the following 85-residue polypeptide: Small ribosomal subunit protein bS20 (85 aa).

The protein belongs to the bacterial ribosomal protein bS20 family.

Functionally, binds directly to 16S ribosomal RNA. This Lactobacillus johnsonii (strain CNCM I-12250 / La1 / NCC 533) protein is Small ribosomal subunit protein bS20.